A 217-amino-acid polypeptide reads, in one-letter code: Large ribosomal subunit protein uL3 (217 aa).

Belongs to the universal ribosomal protein uL3 family. As to quaternary structure, part of the 50S ribosomal subunit. Forms a cluster with proteins L14 and L19.

Its function is as follows. One of the primary rRNA binding proteins, it binds directly near the 3'-end of the 23S rRNA, where it nucleates assembly of the 50S subunit. This chain is Large ribosomal subunit protein uL3, found in Brachyspira hyodysenteriae (strain ATCC 49526 / WA1).